Consider the following 119-residue polypeptide: C-C motif chemokine 24 (119 aa).

The first 26 residues, 1–26 (MAGLATFVVSLLLVTLCAHCIDPAGS), serve as a signal peptide directing secretion. Cystine bridges form between Cys-33-Cys-58 and Cys-34-Cys-74. Residues Asn-54 and Asn-115 are each glycosylated (N-linked (GlcNAc...) asparagine).

It belongs to the intercrine beta (chemokine CC) family.

Its subcellular location is the secreted. Its function is as follows. Chemotactic for resting T-lymphocytes, and eosinophils. Has lower chemotactic activity for neutrophils but none for monocytes and activated lymphocytes. Is a strong suppressor of colony formation by a multipotential hematopoietic progenitor cell line. Binds to CCR3. This chain is C-C motif chemokine 24, found in Canis lupus familiaris (Dog).